Reading from the N-terminus, the 446-residue chain is MEWRRAFSKKKLEEKVKNMDAKQATDYLLEKVDEQRNLENKLDKRLQNTRKKNKNKEKTRTWAEKYPPVDYYSPEFVENFMKDMRREEFEKSEERRGHKQVRLGSDNFVGDDPLKVLSEEALKAGFQHTGKVMKRFPADVFEKSKFIGMYDRHLTTLREKACCKKERNQIQSKLIQLRQLKPSCDFLAGTVSGVPGSGKSTLLKNVQKKLKNSVCLLANKELKGDFAGVPSVFSVEEMLLSAVPSSFNVMLVDEYTLTQSAEILLLQRKLGAKIVVLFGDREQGNTNKLTSPEWLHVPIVFSSDSSHRFGPETAKFCEDQGFSLEGRGGEDKIVKGDYEGEGEDTEVNLCFTEETKADLAEVQVEAFLVSSVQGRTFSSVSLFVRENDKPVFSDPHLRLVAITRHRKLLSIRADPEVWVSFMFATREGEEVDTHCYGEEHRPDEAE.

The disordered stretch occupies residues 40 to 60 (NKLDKRLQNTRKKNKNKEKTR). The (+)RNA virus helicase ATP-binding domain occupies 160–303 (KACCKKERNQ…WLHVPIVFSS (144 aa)). 193–200 (GVPGSGKS) contributes to the ATP binding site. The (+)RNA virus helicase C-terminal domain occupies 304–444 (DSSHRFGPET…CYGEEHRPDE (141 aa)).

Belongs to the virgaviridae/benyvirus TGB1 movement protein family. As to quaternary structure, homooligomer. Interacts with movement protein TGB3. TGB1-TGB3-TGB2 complex formation is enhanced by ATP hydrolysis. Interacts with the suppressor of RNA silencing (via N-terminus). It depends on Mg(2+) as a cofactor.

The protein resides in the host cell junction. It is found in the host plasmodesma. The protein localises to the host nucleus. Its subcellular location is the host cytoplasm. It localises to the host nucleolus. The protein resides in the host cytoskeleton. It catalyses the reaction ATP + H2O = ADP + phosphate + H(+). Participates in the transport of viral genome to neighboring plant cells directly through plasmodesmata, without any budding. Multifunctional movement protein with RNA-binding, ATPase and helicase activities. Engages in homologous interactions leading to the formation of a ribonucleoprotein complex containing plus-sense viral RNAs (vRNPs). ATPase activity is probably required for vRNPs movement complex assembly. Intracellular delivery of TGBp1-containing vRNPs to plasmodesmata is facilitated by TGBp2 and TGBp3. In Arachis hypogaea (Peanut), this protein is Movement protein TGB1.